We begin with the raw amino-acid sequence, 304 residues long: Secreted mono- and diacylglycerol lipase MDL4 (304 aa).

The first 19 residues, 1-19 (MRFGGVVSLVLGFIVSVLA), serve as a signal peptide directing secretion. Cysteine 55 and cysteine 297 are joined by a disulfide. Asparagine 102 and asparagine 161 each carry an N-linked (GlcNAc...) asparagine glycan. Serine 171 serves as the catalytic Nucleophile. Aspartate 228 is an active-site residue. A glycan (N-linked (GlcNAc...) asparagine) is linked at asparagine 253. The active site involves histidine 281.

This sequence belongs to the AB hydrolase superfamily. Lipase family. Class 3 subfamily.

The protein resides in the secreted. It localises to the cell wall. The catalysed reaction is a monoacylglycerol + H2O = glycerol + a fatty acid + H(+). It catalyses the reaction a diacylglycerol + H2O = a monoacylglycerol + a fatty acid + H(+). Functionally, secreted lipase involved in Dandruff and seborrheic dermatitis (D/SD) probably via lipase-mediated breakdown of sebaceous lipids and release of irritating free fatty acids. Shows activity against monoglyceride and diglyceride substrates, but not triglyceride substrates and does not exhibit regio-selective production of diacylglycerols. Cleaves oleic acid from 1,2 isomers of diolein on both the 1 and the 2 position of the glycerol backbone, resulting mainly in free fatty acids but no monoolein is detected. Shows activity on monoolein and liberates mostly free fatty acids, but can also perform the reverse reaction and produce diolein. The protein is Secreted mono- and diacylglycerol lipase MDL4 of Malassezia globosa (strain ATCC MYA-4612 / CBS 7966) (Dandruff-associated fungus).